Reading from the N-terminus, the 311-residue chain is Urease accessory protein UreD (311 aa).

The protein belongs to the UreD family. In terms of assembly, ureD, UreF and UreG form a complex that acts as a GTP-hydrolysis-dependent molecular chaperone, activating the urease apoprotein by helping to assemble the nickel containing metallocenter of UreC. The UreE protein probably delivers the nickel.

Its subcellular location is the cytoplasm. In terms of biological role, required for maturation of urease via the functional incorporation of the urease nickel metallocenter. In Synechococcus sp. (strain CC9605), this protein is Urease accessory protein UreD.